The primary structure comprises 151 residues: D-aminoacyl-tRNA deacylase (151 aa).

A Gly-cisPro motif, important for rejection of L-amino acids motif is present at residues 137-138 (GP).

It belongs to the DTD family. Homodimer.

It localises to the cytoplasm. It carries out the reaction glycyl-tRNA(Ala) + H2O = tRNA(Ala) + glycine + H(+). It catalyses the reaction a D-aminoacyl-tRNA + H2O = a tRNA + a D-alpha-amino acid + H(+). In terms of biological role, an aminoacyl-tRNA editing enzyme that deacylates mischarged D-aminoacyl-tRNAs. Also deacylates mischarged glycyl-tRNA(Ala), protecting cells against glycine mischarging by AlaRS. Acts via tRNA-based rather than protein-based catalysis; rejects L-amino acids rather than detecting D-amino acids in the active site. By recycling D-aminoacyl-tRNA to D-amino acids and free tRNA molecules, this enzyme counteracts the toxicity associated with the formation of D-aminoacyl-tRNA entities in vivo and helps enforce protein L-homochirality. This is D-aminoacyl-tRNA deacylase from Geobacter metallireducens (strain ATCC 53774 / DSM 7210 / GS-15).